The following is a 237-amino-acid chain: 1-(5-phosphoribosyl)-5-[(5-phosphoribosylamino)methylideneamino] imidazole-4-carboxamide isomerase (237 aa).

The Proton acceptor role is filled by D8. Residue D130 is the Proton donor of the active site.

The protein belongs to the HisA/HisF family.

Its subcellular location is the cytoplasm. The enzyme catalyses 1-(5-phospho-beta-D-ribosyl)-5-[(5-phospho-beta-D-ribosylamino)methylideneamino]imidazole-4-carboxamide = 5-[(5-phospho-1-deoxy-D-ribulos-1-ylimino)methylamino]-1-(5-phospho-beta-D-ribosyl)imidazole-4-carboxamide. It participates in amino-acid biosynthesis; L-histidine biosynthesis; L-histidine from 5-phospho-alpha-D-ribose 1-diphosphate: step 4/9. The polypeptide is 1-(5-phosphoribosyl)-5-[(5-phosphoribosylamino)methylideneamino] imidazole-4-carboxamide isomerase (Caldicellulosiruptor bescii (strain ATCC BAA-1888 / DSM 6725 / KCTC 15123 / Z-1320) (Anaerocellum thermophilum)).